The sequence spans 179 residues: Small ribosomal subunit protein uS5 (179 aa).

The S5 DRBM domain occupies 22–85 (MIEKLVAVNR…EYARKRMANV (64 aa)).

This sequence belongs to the universal ribosomal protein uS5 family. In terms of assembly, part of the 30S ribosomal subunit. Contacts proteins S4 and S8.

Its function is as follows. With S4 and S12 plays an important role in translational accuracy. In terms of biological role, located at the back of the 30S subunit body where it stabilizes the conformation of the head with respect to the body. The sequence is that of Small ribosomal subunit protein uS5 from Xylella fastidiosa (strain M12).